The sequence spans 286 residues: ATP synthase gamma chain (286 aa).

The protein belongs to the ATPase gamma chain family. In terms of assembly, F-type ATPases have 2 components, CF(1) - the catalytic core - and CF(0) - the membrane proton channel. CF(1) has five subunits: alpha(3), beta(3), gamma(1), delta(1), epsilon(1). CF(0) has three main subunits: a, b and c.

It is found in the cell inner membrane. Functionally, produces ATP from ADP in the presence of a proton gradient across the membrane. The gamma chain is believed to be important in regulating ATPase activity and the flow of protons through the CF(0) complex. In Pseudomonas putida (strain W619), this protein is ATP synthase gamma chain.